A 1706-amino-acid polypeptide reads, in one-letter code: Cadherin-99C (1706 aa).

The first 28 residues, 1–28 (MAARNSLTPQQGLGFFGLLILLCSAVLG), serve as a signal peptide directing secretion. Over 29 to 1395 (KSQMCEVETG…AIDNEVFPFT (1367 aa)) the chain is Extracellular. Cadherin domains follow at residues 68–142 (DPDT…APRF), 143–264 (MNTP…DPSF), 277–387 (INPE…PPVI), 388–500 (SSSQ…APKL), 519–604 (VTQV…PPRF), 605–704 (QKPI…NPEF), 707–807 (STLP…VPKF), 808–908 (SDAR…PPRF), 909–1005 (ITVP…RVDV), 1038–1148 (SDDS…APEF), and 1156–1270 (QQDT…ALSF). N-linked (GlcNAc...) asparagine glycans are attached at residues N105 and N188. N-linked (GlcNAc...) asparagine glycosylation is found at N442, N553, N620, and N753. N-linked (GlcNAc...) asparagine glycans are attached at residues N1053, N1088, and N1108. N-linked (GlcNAc...) asparagine glycosylation is found at N1311 and N1367. Residues 1396 to 1416 (LIAISLVILILGTIGIIYICI) traverse the membrane as a helical segment. At 1417–1706 (SWSKYKNFKQ…RSEVETTTEL (290 aa)) the chain is on the cytoplasmic side.

In terms of assembly, interacts (via the cytoplasmic domain) with ck. Interacts (via the cytoplasmic domain) with Cul1 and Ubr3.

It localises to the apical cell membrane. The protein localises to the endosome membrane. Its subcellular location is the cell projection. The protein resides in the microvillus membrane. Cadherin that functions in epithelial morphogenesis and the intestine epithelial immune response. Essential for female fertility. Regulates the length and organization of apical microvilli in developing follicle cells and salivary glands. Function in the follicle cell is essential for egg development as the microvilli secrete eggshell material such as the vitelline membrane. Acts at least in part by regulating the recruitment of the myosin ck to the follicle cell microvilli. Also required to regulate cell rearrangements during salivary tube elongation, possibly by modulating cellular adhesion between the apical surface and apical extracellular matrix during epithelial tube elongation. May also function in cellular adhesion during the development of other tubular epithelia such as the trachea. Possibly functions as an apical membrane determinant which acts in apical membrane expansion during salivary and tracheal epithelial tube elongation. In salivary gland development, this function is independent of the other apical membrane determinants crb and sas. Essential downstream component of a hh-signaling pathway which regulates the Duox-dependent gut epithelial immune response to bacterial uracil; required for endosome formation in the enterocyte and activating norpA-dependent Ca2+ mobilization, which are essential steps in the Duox-dependent production of reactive oxygen species (ROS) in response to intestinal bacterial infection. This Drosophila melanogaster (Fruit fly) protein is Cadherin-99C.